A 354-amino-acid polypeptide reads, in one-letter code: Dual-specificity RNA methyltransferase RlmN (354 aa).

Glutamate 89 functions as the Proton acceptor in the catalytic mechanism. The region spanning 106–339 (KEAKYTVCVS…CTIRKSKGMD (234 aa)) is the Radical SAM core domain. Cysteines 113 and 344 form a disulfide. [4Fe-4S] cluster is bound by residues cysteine 120, cysteine 124, and cysteine 127. Residues 170–171 (GE), serine 202, 225–227 (SLH), and asparagine 301 each bind S-adenosyl-L-methionine. Cysteine 344 serves as the catalytic S-methylcysteine intermediate.

This sequence belongs to the radical SAM superfamily. RlmN family. It depends on [4Fe-4S] cluster as a cofactor.

The protein localises to the cytoplasm. It catalyses the reaction adenosine(2503) in 23S rRNA + 2 reduced [2Fe-2S]-[ferredoxin] + 2 S-adenosyl-L-methionine = 2-methyladenosine(2503) in 23S rRNA + 5'-deoxyadenosine + L-methionine + 2 oxidized [2Fe-2S]-[ferredoxin] + S-adenosyl-L-homocysteine. It carries out the reaction adenosine(37) in tRNA + 2 reduced [2Fe-2S]-[ferredoxin] + 2 S-adenosyl-L-methionine = 2-methyladenosine(37) in tRNA + 5'-deoxyadenosine + L-methionine + 2 oxidized [2Fe-2S]-[ferredoxin] + S-adenosyl-L-homocysteine. In terms of biological role, specifically methylates position 2 of adenine 2503 in 23S rRNA and position 2 of adenine 37 in tRNAs. m2A2503 modification seems to play a crucial role in the proofreading step occurring at the peptidyl transferase center and thus would serve to optimize ribosomal fidelity. In Nautilia profundicola (strain ATCC BAA-1463 / DSM 18972 / AmH), this protein is Dual-specificity RNA methyltransferase RlmN.